The sequence spans 189 residues: Cytochrome bo(3) ubiquinol oxidase subunit 3 (189 aa).

The Cytoplasmic segment spans residues 1–10 (MIKETMRNNK). Residues 11 to 31 (LFGLWIYLMSDCIIFAVLFAV) traverse the membrane as a helical segment. The Extracellular portion of the chain corresponds to 32 to 52 (YAIISSNFSTNLINHKIFNLS). A helical transmembrane segment spans residues 53–73 (YVFLETLILLLSSLSSGMLTI). Over 74-81 (QKNKNNIK) the chain is Cytoplasmic. A helical transmembrane segment spans residues 82–102 (IIYFYLLLTFFLGLSFLLMEV). Topologically, residues 103 to 122 (NEFYKLILENCSPSQHAFFS) are extracellular. The chain crosses the membrane as a helical span at residues 123-143 (IFFTIVGVHGIHVFFGLIFIL). The Cytoplasmic portion of the chain corresponds to 144 to 161 (SILYQLFYLGITNTIRIR). The chain crosses the membrane as a helical span at residues 162–182 (ILCFSLFWHFLDIIWICVFTF). Residues 183–189 (VYLNGVI) lie on the Extracellular side of the membrane.

This sequence belongs to the cytochrome c oxidase subunit 3 family. In terms of assembly, heterooctamer of two A chains, two B chains, two C chains and two D chains.

It is found in the cell membrane. Functionally, cytochrome bo(3) ubiquinol terminal oxidase is the component of the aerobic respiratory chain of E.coli that predominates when cells are grown at high aeration. Has proton pump activity across the membrane in addition to electron transfer, pumping 2 protons/electron. This chain is Cytochrome bo(3) ubiquinol oxidase subunit 3 (cyoC), found in Buchnera aphidicola subsp. Schizaphis graminum (strain Sg).